Here is an 85-residue protein sequence, read N- to C-terminus: Toxin To9 (85 aa).

Residues 1–19 (MNYSTLIAVASLLTAGTES) form the signal peptide. The LCN-type CS-alpha/beta domain occupies 21-81 (KDGYPVKEGD…AAIKGYGRCR (61 aa)). 4 cysteine pairs are disulfide-bonded: Cys31-Cys80, Cys35-Cys56, Cys42-Cys63, and Cys46-Cys65. Proline amide is present on Pro82.

This sequence belongs to the long (4 C-C) scorpion toxin superfamily. Sodium channel inhibitor family. Alpha subfamily. Expressed by the venom gland.

It localises to the secreted. Functionally, alpha toxins bind voltage-independently at site-3 of sodium channels (Nav) and inhibit the inactivation of the activated channels, thereby blocking neuronal transmission. The protein is Toxin To9 of Tityus obscurus (Amazonian scorpion).